Consider the following 593-residue polypeptide: UvrABC system protein C (593 aa).

A GIY-YIG domain is found at 17-94 (MEPGCYLMKD…IKQYQPRYNI (78 aa)). One can recognise a UVR domain in the interval 199–234 (KTILKSLEERMLTASESLDFERAKEYRDLIQHIQNL).

This sequence belongs to the UvrC family. In terms of assembly, interacts with UvrB in an incision complex.

Its subcellular location is the cytoplasm. The UvrABC repair system catalyzes the recognition and processing of DNA lesions. UvrC both incises the 5' and 3' sides of the lesion. The N-terminal half is responsible for the 3' incision and the C-terminal half is responsible for the 5' incision. This Staphylococcus aureus (strain USA300) protein is UvrABC system protein C.